Reading from the N-terminus, the 142-residue chain is uncharacterized protein (142 aa).

The disordered stretch occupies residues 70–94 (PKSVSNSKKKKEKAEKGLLRPTTKP). Residues 81 to 94 (EKAEKGLLRPTTKP) show a composition bias toward basic and acidic residues.

This is an uncharacterized protein from Bacillus subtilis (strain 168).